The sequence spans 430 residues: Serine--tRNA ligase (430 aa).

An L-serine-binding site is contributed by 237–239 (TAE). 268–270 (RSE) provides a ligand contact to ATP. Glu291 is a binding site for L-serine. Residue 355–358 (EISS) coordinates ATP. Ser391 contacts L-serine.

It belongs to the class-II aminoacyl-tRNA synthetase family. Type-1 seryl-tRNA synthetase subfamily. In terms of assembly, homodimer. The tRNA molecule binds across the dimer.

It localises to the cytoplasm. It catalyses the reaction tRNA(Ser) + L-serine + ATP = L-seryl-tRNA(Ser) + AMP + diphosphate + H(+). It carries out the reaction tRNA(Sec) + L-serine + ATP = L-seryl-tRNA(Sec) + AMP + diphosphate + H(+). It functions in the pathway aminoacyl-tRNA biosynthesis; selenocysteinyl-tRNA(Sec) biosynthesis; L-seryl-tRNA(Sec) from L-serine and tRNA(Sec): step 1/1. Its function is as follows. Catalyzes the attachment of serine to tRNA(Ser). Is also able to aminoacylate tRNA(Sec) with serine, to form the misacylated tRNA L-seryl-tRNA(Sec), which will be further converted into selenocysteinyl-tRNA(Sec). The polypeptide is Serine--tRNA ligase (Cronobacter sakazakii (strain ATCC BAA-894) (Enterobacter sakazakii)).